We begin with the raw amino-acid sequence, 130 residues long: MSMQDPIADMLTRIRNGQAAKHVSVKMPSAKLKIAIAKMLKEEGYITDYAVADEAKPELEITLKYFQGQPVVETIQRVSRPGLRIYKGKNELPKVMGGLGVAIVSTSQGLMTDRTARQNGMGGEVICYVA.

Belongs to the universal ribosomal protein uS8 family. Part of the 30S ribosomal subunit. Contacts proteins S5 and S12.

One of the primary rRNA binding proteins, it binds directly to 16S rRNA central domain where it helps coordinate assembly of the platform of the 30S subunit. The sequence is that of Small ribosomal subunit protein uS8 from Shewanella pealeana (strain ATCC 700345 / ANG-SQ1).